Here is a 44-residue protein sequence, read N- to C-terminus: Cytochrome b559 subunit beta (44 aa).

A helical membrane pass occupies residues 19–35 (WIAVHTLAVPSVFFLGA). His-23 is a heme binding site.

Belongs to the PsbE/PsbF family. Heterodimer of an alpha subunit and a beta subunit. PSII is composed of 1 copy each of membrane proteins PsbA, PsbB, PsbC, PsbD, PsbE, PsbF, PsbH, PsbI, PsbJ, PsbK, PsbL, PsbM, PsbT, PsbX, PsbY, PsbZ, Psb30/Ycf12, peripheral proteins PsbO, CyanoQ (PsbQ), PsbU, PsbV and a large number of cofactors. It forms dimeric complexes. Requires heme b as cofactor.

The protein localises to the cellular thylakoid membrane. This b-type cytochrome is tightly associated with the reaction center of photosystem II (PSII). PSII is a light-driven water:plastoquinone oxidoreductase that uses light energy to abstract electrons from H(2)O, generating O(2) and a proton gradient subsequently used for ATP formation. It consists of a core antenna complex that captures photons, and an electron transfer chain that converts photonic excitation into a charge separation. This chain is Cytochrome b559 subunit beta, found in Cyanothece sp. (strain PCC 7425 / ATCC 29141).